The chain runs to 1134 residues: DENN domain-containing protein 2B (1134 aa).

Positions 1–13 (MTMTANKNSSITH) are enriched in polar residues. Positions 1–90 (MTMTANKNSS…DPSPETSPPI (90 aa)) are disordered. A phosphoserine mark is found at Ser-30 and Ser-32. Over residues 32-43 (SPPPVLYPPRSP) the composition is skewed to pro residues. Thr-228 is subject to Phosphothreonine. Ser-230 carries the phosphoserine modification. 2 disordered regions span residues 233-273 (SYPE…GIRK) and 289-571 (LKEQ…KRHS). Residues 249 to 259 (SLYRLEKRPGR) show a composition bias toward basic and acidic residues. A compositionally biased stretch (low complexity) spans 315–348 (GTLGTLEEPTGTASVSPSSRAGGVAGVAGEAGPP). Thr-361 carries the phosphothreonine modification. Ser-365 carries the post-translational modification Phosphoserine. The segment covering 370–385 (LLPPKSSPDPAVNPVP) has biased composition (pro residues). Positions 389-399 (RTFEYEADKNP) are enriched in basic and acidic residues. Pro residues predominate over residues 406–428 (GLPPSPTPAAPPPLPSTPAPPVT). The span at 429–443 (RRPKKDMRGHRKSQN) shows a compositional bias: basic residues. Positions 453–478 (SSLQSLYPSSPTENGTESQPKFGSKS) are enriched in polar residues. Phosphothreonine is present on Thr-479. 2 stretches are compositionally biased toward polar residues: residues 511-521 (KSQQLSENSLD) and 542-555 (SLKSNSQSLRSGNW). Ser-542 carries the phosphoserine modification. Residues 559–570 (KSHRLPRLPKRH) show a composition bias toward basic residues. Ser-571 and Ser-619 each carry phosphoserine. Positions 633–658 (LSMSSLETASLRDENSESESDSDDRF) are disordered. In terms of domain architecture, uDENN spans 695 to 843 (EYFVVVSLKK…PFPAPGKTIK (149 aa)). Residues 865–998 (RLEHVDFECL…LQAALEQALE (134 aa)) enclose the cDENN domain. The region spanning 1000–1093 (KSELISQDSD…QDRELRKCRA (94 aa)) is the dDENN domain.

In terms of assembly, interacts with ITSN1 and GRB2. Isoform 1 interacts with the SH3 domain of ABL1. Post-translationally, phosphorylated. Phosphorylation decreases ITSN1 binding.

It localises to the cytoplasm. Its subcellular location is the cell cortex. The protein resides in the cell membrane. It is found in the recycling endosome. Functionally, may be involved in cytoskeletal organization and tumorogenicity. Seems to be involved in a signaling transduction pathway leading to activation of MAPK1/ERK2. Plays a role in EGFR trafficking from recycling endosomes back to the cell membrane. Guanine nucleotide exchange factor (GEF) which may activate RAB9A and RAB9B. Promotes the exchange of GDP to GTP, converting inactive GDP-bound Rab proteins into their active GTP-bound form. In terms of biological role, may block ERK2 activation stimulated by ABL1. May alter cell morphology and cell growth. This is DENN domain-containing protein 2B (Dennd2b) from Mus musculus (Mouse).